The following is a 181-amino-acid chain: Mitochondrial inner membrane protein Mpv17 (181 aa).

Transmembrane regions (helical) follow at residues 20 to 38 (VIVSGAVCGAGDAFTQYLT), 48 to 70 (TARFTCLAAVFIAPPLNVWFRVL), 91 to 113 (FMFSPFFNAIILVNLRLLEGFSF), and 140 to 162 (LINFYFVPLNYRVILIQVVAFFW).

It belongs to the peroxisomal membrane protein PXMP2/4 family.

The protein localises to the mitochondrion inner membrane. Functionally, involved in mitochondria homeostasis. This chain is Mitochondrial inner membrane protein Mpv17, found in Caenorhabditis briggsae.